Consider the following 137-residue polypeptide: Ribosome-binding factor A (137 aa).

A disordered region spans residues 112-137; it reads KKDEVKEDESHEDESTDHTEETNEEP. The span at 127–137 shows a compositional bias: basic and acidic residues; the sequence is TDHTEETNEEP.

The protein belongs to the RbfA family. In terms of assembly, monomer. Binds 30S ribosomal subunits, but not 50S ribosomal subunits or 70S ribosomes.

It is found in the cytoplasm. One of several proteins that assist in the late maturation steps of the functional core of the 30S ribosomal subunit. Associates with free 30S ribosomal subunits (but not with 30S subunits that are part of 70S ribosomes or polysomes). Required for efficient processing of 16S rRNA. May interact with the 5'-terminal helix region of 16S rRNA. This is Ribosome-binding factor A from Coprothermobacter proteolyticus (strain ATCC 35245 / DSM 5265 / OCM 4 / BT).